A 379-amino-acid polypeptide reads, in one-letter code: Cytochrome b (379 aa).

4 consecutive transmembrane segments (helical) span residues 33–53 (FGSL…FLAM), 77–98 (WTIR…FIHV), 113–133 (WNIG…GYVL), and 178–198 (FFAL…IHLL). Heme b contacts are provided by His-83 and His-97. Heme b contacts are provided by His-182 and His-196. A ubiquinone is bound at residue His-201. 4 helical membrane-spanning segments follow: residues 226-246 (TKDF…TLFY), 288-308 (PGGV…PFLQ), 320-340 (LSQF…WIGG), and 347-367 (FISI…FIMP).

Belongs to the cytochrome b family. The cytochrome bc1 complex contains 11 subunits: 3 respiratory subunits (MT-CYB, CYC1 and UQCRFS1), 2 core proteins (UQCRC1 and UQCRC2) and 6 low-molecular weight proteins (UQCRH/QCR6, UQCRB/QCR7, UQCRQ/QCR8, UQCR10/QCR9, UQCR11/QCR10 and a cleavage product of UQCRFS1). This cytochrome bc1 complex then forms a dimer. It depends on heme b as a cofactor.

Its subcellular location is the mitochondrion inner membrane. Functionally, component of the ubiquinol-cytochrome c reductase complex (complex III or cytochrome b-c1 complex) that is part of the mitochondrial respiratory chain. The b-c1 complex mediates electron transfer from ubiquinol to cytochrome c. Contributes to the generation of a proton gradient across the mitochondrial membrane that is then used for ATP synthesis. The polypeptide is Cytochrome b (MT-CYB) (Lepilemur ruficaudatus (Red-tailed sportive lemur)).